The chain runs to 395 residues: Protein UNIFOLIATA (395 aa).

Disordered regions lie at residues 147 to 170 (SQEG…GGGS) and 185 to 223 (QIRR…GERQ). A compositionally biased stretch (acidic residues) spans 202 to 211 (EEGEEEEEDN). 3 consecutive DNA-binding regions follow at residues 224–228 (REHPF), 293–300 (NKPKMRHY), and 364–367 (YGPT).

It belongs to the FLO/LFY family. In terms of tissue distribution, highly expressed in leaf, leaflet, inflorescence and lateral shoot primordia on the main shoot axis, and in floral organ and carpel primordia.

It localises to the nucleus. In terms of biological role, may regulate indeterminacy during leaf and flower development. The polypeptide is Protein UNIFOLIATA (UNI) (Pisum sativum (Garden pea)).